A 179-amino-acid chain; its full sequence is uncharacterized protein (179 aa).

Positions 1–27 (MKTISKQLSAVIFPFIFSACVSQSASS) form a signal peptide, or 24.

This is an uncharacterized protein from Haemophilus influenzae (strain ATCC 51907 / DSM 11121 / KW20 / Rd).